The sequence spans 483 residues: Regulatory protein ViaA (483 aa).

It belongs to the ViaA family. In terms of assembly, homodimer. Interacts with RavA.

The protein localises to the cytoplasm. Component of the RavA-ViaA chaperone complex, which may act on the membrane to optimize the function of some of the respiratory chains. ViaA stimulates the ATPase activity of RavA. This is Regulatory protein ViaA from Salmonella arizonae (strain ATCC BAA-731 / CDC346-86 / RSK2980).